A 206-amino-acid polypeptide reads, in one-letter code: LexA repressor (206 aa).

The H-T-H motif DNA-binding region spans 28–48 (RAEIATRLGFKSANAAEEHLK). Active-site for autocatalytic cleavage activity residues include S123 and K160.

This sequence belongs to the peptidase S24 family. In terms of assembly, homodimer.

The enzyme catalyses Hydrolysis of Ala-|-Gly bond in repressor LexA.. Functionally, represses a number of genes involved in the response to DNA damage (SOS response), including recA and lexA. In the presence of single-stranded DNA, RecA interacts with LexA causing an autocatalytic cleavage which disrupts the DNA-binding part of LexA, leading to derepression of the SOS regulon and eventually DNA repair. The sequence is that of LexA repressor from Shewanella baltica (strain OS223).